A 286-amino-acid polypeptide reads, in one-letter code: Thymidylate synthase (286 aa).

Residues R21 and 136-137 (RR) contribute to the dUMP site. Catalysis depends on C156, which acts as the Nucleophile. DUMP-binding positions include 176-179 (RSVD), N187, and 217-219 (HIY). D179 provides a ligand contact to (6R)-5,10-methylene-5,6,7,8-tetrahydrofolate. Residue A285 participates in (6R)-5,10-methylene-5,6,7,8-tetrahydrofolate binding.

This sequence belongs to the thymidylate synthase family. As to quaternary structure, homodimer.

It carries out the reaction dUMP + (6R)-5,10-methylene-5,6,7,8-tetrahydrofolate = 7,8-dihydrofolate + dTMP. Its pathway is pyrimidine metabolism; dTTP biosynthesis. The polypeptide is Thymidylate synthase (TD) (Enterobacteria phage T4 (Bacteriophage T4)).